A 227-amino-acid chain; its full sequence is Cytochrome c oxidase subunit 2 (227 aa).

At 1-26 (MATWSNLSIQDGASPLMEQLSFFHDD) the chain is on the mitochondrial intermembrane side. The chain crosses the membrane as a helical span at residues 27–48 (HTMVVLLITVIVGYALSYMLFN). The Mitochondrial matrix segment spans residues 49–62 (AYTNRNMLHGHLIE). A helical transmembrane segment spans residues 63–82 (TIWTALPAITLIFIALPSLR). Residues 83-227 (LLYLLDDSVD…LFIKWLSKMI (145 aa)) are Mitochondrial intermembrane-facing. Residues H161, C196, E198, C200, H204, and M207 each coordinate Cu cation. E198 contacts Mg(2+).

This sequence belongs to the cytochrome c oxidase subunit 2 family. Component of the cytochrome c oxidase (complex IV, CIV), a multisubunit enzyme composed of a catalytic core of 3 subunits and several supernumerary subunits. The complex exists as a monomer or a dimer and forms supercomplexes (SCs) in the inner mitochondrial membrane with ubiquinol-cytochrome c oxidoreductase (cytochrome b-c1 complex, complex III, CIII). The cofactor is Cu cation.

It is found in the mitochondrion inner membrane. The enzyme catalyses 4 Fe(II)-[cytochrome c] + O2 + 8 H(+)(in) = 4 Fe(III)-[cytochrome c] + 2 H2O + 4 H(+)(out). Functionally, component of the cytochrome c oxidase, the last enzyme in the mitochondrial electron transport chain which drives oxidative phosphorylation. The respiratory chain contains 3 multisubunit complexes succinate dehydrogenase (complex II, CII), ubiquinol-cytochrome c oxidoreductase (cytochrome b-c1 complex, complex III, CIII) and cytochrome c oxidase (complex IV, CIV), that cooperate to transfer electrons derived from NADH and succinate to molecular oxygen, creating an electrochemical gradient over the inner membrane that drives transmembrane transport and the ATP synthase. Cytochrome c oxidase is the component of the respiratory chain that catalyzes the reduction of oxygen to water. Electrons originating from reduced cytochrome c in the intermembrane space (IMS) are transferred via the dinuclear copper A center (CU(A)) of subunit 2 and heme A of subunit 1 to the active site in subunit 1, a binuclear center (BNC) formed by heme A3 and copper B (CU(B)). The BNC reduces molecular oxygen to 2 water molecules using 4 electrons from cytochrome c in the IMS and 4 protons from the mitochondrial matrix. This is Cytochrome c oxidase subunit 2 (COII) from Schistocerca gregaria (Desert locust).